The sequence spans 537 residues: ATP synthase subunit beta 1 (537 aa).

164 to 171 (GGAGVGKT) serves as a coordination point for ATP. Residues 471–537 (PKQSATEKNS…ESLEEPQNGR (67 aa)) are disordered. Polar residues-rich tracts occupy residues 473-498 (QSAT…SPGP) and 507-528 (IPSS…AQNE).

The protein belongs to the ATPase alpha/beta chains family. In terms of assembly, F-type ATPases have 2 components, CF(1) - the catalytic core - and CF(0) - the membrane proton channel. CF(1) has five subunits: alpha(3), beta(3), gamma(1), delta(1), epsilon(1). CF(0) has three main subunits: a(1), b(2) and c(9-12). The alpha and beta chains form an alternating ring which encloses part of the gamma chain. CF(1) is attached to CF(0) by a central stalk formed by the gamma and epsilon chains, while a peripheral stalk is formed by the delta and b chains.

The protein localises to the cell inner membrane. It catalyses the reaction ATP + H2O + 4 H(+)(in) = ADP + phosphate + 5 H(+)(out). Its function is as follows. Produces ATP from ADP in the presence of a proton gradient across the membrane. The catalytic sites are hosted primarily by the beta subunits. In Pseudoalteromonas atlantica (strain T6c / ATCC BAA-1087), this protein is ATP synthase subunit beta 1.